A 217-amino-acid chain; its full sequence is 3,4-dihydroxy-2-butanone 4-phosphate synthase (217 aa).

D-ribulose 5-phosphate contacts are provided by residues 37–38 (RE), aspartate 42, 150–154 (RRGHT), and glutamate 174. Residue glutamate 38 coordinates Mg(2+). Histidine 153 contacts Mg(2+).

It belongs to the DHBP synthase family. As to quaternary structure, homodimer. It depends on Mg(2+) as a cofactor. Requires Mn(2+) as cofactor.

The catalysed reaction is D-ribulose 5-phosphate = (2S)-2-hydroxy-3-oxobutyl phosphate + formate + H(+). The protein operates within cofactor biosynthesis; riboflavin biosynthesis; 2-hydroxy-3-oxobutyl phosphate from D-ribulose 5-phosphate: step 1/1. Functionally, catalyzes the conversion of D-ribulose 5-phosphate to formate and 3,4-dihydroxy-2-butanone 4-phosphate. The protein is 3,4-dihydroxy-2-butanone 4-phosphate synthase of Shewanella sp. (strain MR-4).